The chain runs to 64 residues: MPKSKTHSGTAKRFKVSGSGKILRQKAGRRHLLEHKATKVTRRLDGVAVVSKADTPRIKRLLDI.

Positions 1–15 are enriched in basic residues; that stretch reads MPKSKTHSGTAKRFK. Residues 1–23 form a disordered region; the sequence is MPKSKTHSGTAKRFKVSGSGKIL.

It belongs to the bacterial ribosomal protein bL35 family.

The protein is Large ribosomal subunit protein bL35 of Rhodococcus jostii (strain RHA1).